The sequence spans 92 residues: C-C motif chemokine 3 (92 aa).

Residues 1 to 23 (MQVSTAALAVLLCTMALCNQFSA) form the signal peptide. Cystine bridges form between C33–C57 and C34–C73.

This sequence belongs to the intercrine beta (chemokine CC) family. As to quaternary structure, self-associates. Also heterodimer of MIP-1-alpha(4-69) and MIP-1-beta(3-69). Interacts with CCR1.

Its subcellular location is the secreted. In terms of biological role, monokine with inflammatory and chemokinetic properties. Binds to CCR1, CCR4 and CCR5. One of the major HIV-suppressive factors produced by CD8+ T-cells. Recombinant MIP-1-alpha induces a dose-dependent inhibition of different strains of HIV-1, HIV-2, and simian immunodeficiency virus (SIV). The sequence is that of C-C motif chemokine 3 (CCL3) from Pan troglodytes (Chimpanzee).